Here is a 177-residue protein sequence, read N- to C-terminus: Isopentenyl-diphosphate Delta-isomerase (177 aa).

Residues His-22 and His-28 each contribute to the Mn(2+) site. The Nudix hydrolase domain occupies 26 to 160 (LRHKAISVFV…PERFTPWLRI (135 aa)). Cys-62 is a catalytic residue. His-64 provides a ligand contact to Mn(2+). Residue Glu-82 participates in Mg(2+) binding. Positions 108 and 110 each coordinate Mn(2+). Residue Glu-110 is part of the active site.

The protein belongs to the IPP isomerase type 1 family. Mg(2+) is required as a cofactor. It depends on Mn(2+) as a cofactor.

Its subcellular location is the cytoplasm. The catalysed reaction is isopentenyl diphosphate = dimethylallyl diphosphate. The protein operates within isoprenoid biosynthesis; dimethylallyl diphosphate biosynthesis; dimethylallyl diphosphate from isopentenyl diphosphate: step 1/1. It functions in the pathway porphyrin-containing compound metabolism; chlorophyll biosynthesis. Its function is as follows. Catalyzes the 1,3-allylic rearrangement of the homoallylic substrate isopentenyl (IPP) to its highly electrophilic allylic isomer, dimethylallyl diphosphate (DMAPP). This chain is Isopentenyl-diphosphate Delta-isomerase, found in Cereibacter sphaeroides (strain ATCC 17025 / ATH 2.4.3) (Rhodobacter sphaeroides).